The primary structure comprises 652 residues: Vitrin (652 aa).

Positions 1–26 (MGIVVLTMKASVIEMFLVLLVTGIQS) are cleaved as a signal peptide. In terms of domain architecture, LCCL spans 40 to 133 (TVPQISCDVR…LSLPRWRESF (94 aa)). 2 cysteine pairs are disulfide-bonded: Cys46/Cys62 and Cys66/Cys86. Disordered regions lie at residues 137-181 (EGKP…AAQP) and 196-231 (THTTLPKPSPSAGSTASGLRPQPAGQRSKDLGEPAL). Residues 145-158 (TYPSSLTYSSSKSP) show a composition bias toward low complexity. Residues 196 to 212 (THTTLPKPSPSAGSTAS) show a composition bias toward polar residues. VWFA domains are found at residues 267 to 452 (DLSF…VKRV) and 469 to 638 (DIGF…VPKV). Asn494 is a glycosylation site (N-linked (GlcNAc...) asparagine).

Binds dermatan sulfate and chondroitin sulfate.

The protein localises to the secreted. The protein resides in the extracellular space. Its subcellular location is the extracellular matrix. Promotes matrix assembly and cell adhesiveness. Plays a role in spinal cord formation by regulating the proliferation and differentiation of neural stem cells. This Bos taurus (Bovine) protein is Vitrin (VIT).